The following is a 1099-amino-acid chain: Transmembrane protein 132D (1099 aa).

Residues 1-30 (MCPSEMGTLWHHWSPVLISLAALFSKVTEG) form the signal peptide. Residues 31-915 (RGILESIQRF…LMQASKGLSD (885 aa)) lie on the Extracellular side of the membrane. Asn-505 carries N-linked (GlcNAc...) asparagine glycosylation. The disordered stretch occupies residues 797 to 858 (FGQNDANPNT…LMEGRGTTTD (62 aa)). The span at 835-848 (GSQEGQYYGSSSMG) shows a compositional bias: low complexity. Residues 916-936 (LEIGMYALLGVFCLAILVFLI) form a helical membrane-spanning segment. Residues 937 to 1099 (NCVTFALKYR…NYMERLHENV (163 aa)) lie on the Cytoplasmic side of the membrane.

The protein belongs to the TMEM132 family. Interacts (via C-terminus) with NCKAP. As to expression, expressed in mature oligodendrocytes. Detected in the brain, lung, pancreas and testis. Highly expressed in mature neurons of the adult nervous system.

It is found in the membrane. Regulate neuronals morphology via inhibition of the WAVE regulatory complex (WCR), a complex that controls F-actin cytoskeletal dynamics. The protein is Transmembrane protein 132D of Homo sapiens (Human).